We begin with the raw amino-acid sequence, 107 residues long: Defensin-like protein 242 (107 aa).

The signal sequence occupies residues 1–22 (MKVVAIFLASCVLFSLIPTHLS). 4 disulfide bridges follow: cysteine 45-cysteine 100, cysteine 55-cysteine 84, cysteine 65-cysteine 94, and cysteine 82-cysteine 96.

This sequence belongs to the DEFL family.

Its subcellular location is the secreted. The polypeptide is Defensin-like protein 242 (SCRL10) (Arabidopsis thaliana (Mouse-ear cress)).